Reading from the N-terminus, the 175-residue chain is PE-PGRS family protein PE_PGRS8 (175 aa).

Positions 1 to 93 (MSFVIAAPEA…AGSYAAAEAA (93 aa)) constitute a PE domain.

The protein belongs to the mycobacterial PE family. PGRS subfamily.

It is found in the secreted. It localises to the cell wall. The protein localises to the cell surface. In Mycobacterium tuberculosis (strain ATCC 25618 / H37Rv), this protein is PE-PGRS family protein PE_PGRS8.